We begin with the raw amino-acid sequence, 591 residues long: Calnexin (591 aa).

The signal sequence occupies residues 1 to 20; the sequence is MEGKWLLCLLLVLGTAAIQA. Residues 21–482 are Lumenal-facing; sequence HDGHDDDMID…QMLEAAEERP (462 aa). Positions 75 and 118 each coordinate Ca(2+). Lys138 is subject to N6-acetyllysine. Cysteines 161 and 195 form a disulfide. Residues Tyr165, Lys167, Tyr186, and Asp193 each contribute to the an alpha-D-glucoside site. The interval 261–347 is disordered; it reads GNLLNDMTPP…EKPEDWDEDM (87 aa). Over residues 275-320 the composition is skewed to basic and acidic residues; that stretch reads REIEDPEDRKPEDWDERPKIADPDAVKPDDWDEDAPSKIPDEEATK. Residues 277-410 are p domain (Extended arm); the sequence is IEDPEDRKPE…RKIPNPDFFE (134 aa). Repeat copies occupy residues 279–291, 296–308, 315–327, 334–346, and 349–359. 4 X approximate repeats regions lie at residues 279 to 346 and 349 to 406; these read DPED…WDED and GEWE…IPNP. Positions 324 to 347 are enriched in acidic residues; it reads WLDDEPEYIPDPDAEKPEDWDEDM. Residues 327 to 360 are interaction with PPIB; it reads DEPEYIPDPDAEKPEDWDEDMDGEWEAPQIANPK. An intrachain disulfide couples Cys361 to Cys367. 3 consecutive repeat copies span residues 368–378, 382–392, and 396–406. An alpha-D-glucoside is bound at residue Glu426. Asp437 is a Ca(2+) binding site. The helical transmembrane segment at 483-503 threads the bilayer; sequence WLWVVYILTVALPVFLVILFC. 2 S-palmitoyl cysteine lipidation sites follow: Cys503 and Cys504. The Cytoplasmic segment spans residues 504–591; sequence CSGKKQSNAM…SPRNRKPRRE (88 aa). The sufficient to mediate interaction with SGIP1 stretch occupies residues 504-591; that stretch reads CSGKKQSNAM…SPRNRKPRRE (88 aa). The segment covering 514-538 has biased composition (basic and acidic residues); sequence EYKKTDAPQPDVKDEEGKEEEKNKG. The segment at 514 to 591 is disordered; that stretch reads EYKKTDAPQP…SPRNRKPRRE (78 aa). Ser553 carries the phosphoserine modification. Acidic residues predominate over residues 555–568; that stretch reads AEEDGGTGSQDEED. Phosphothreonine is present on Thr561. At Ser563 the chain carries Phosphoserine; by MAPK3. Phosphoserine is present on Ser582.

It belongs to the calreticulin family. Interacts with MAPK3/ERK1. Interacts with KCNH2. Associates with ribosomes. Interacts with SGIP1; involved in negative regulation of endocytosis. The palmitoylated form interacts with the ribosome-translocon complex component SSR1, promoting efficient folding of glycoproteins. Interacts with SERPINA2P/SERPINA2 and with the S and Z variants of SERPINA1. Interacts with PPIB. Interacts with ZNRF4. Interacts with SMIM22. Interacts with TMX2. Interacts with TMEM35A/NACHO and CHRNA7. Interacts with reticulophagy regulators RETREG2 and RETREG3. Interacts with DNM1L; may form part of a larger protein complex at the ER-mitochondrial interface during mitochondrial fission. Interacts with ADAM7. In terms of processing, phosphorylated at Ser-563 by MAPK3/ERK1. Phosphorylation by MAPK3/ERK1 increases its association with ribosomes. Post-translationally, palmitoylation by DHHC6 leads to the preferential localization to the perinuclear rough ER. It mediates the association of calnexin with the ribosome-translocon complex (RTC) which is required for efficient folding of glycosylated proteins. Ubiquitinated, leading to proteasomal degradation. Probably ubiquitinated by ZNRF4.

It is found in the endoplasmic reticulum membrane. It localises to the mitochondrion membrane. The protein resides in the melanosome membrane. In terms of biological role, calcium-binding protein that interacts with newly synthesized monoglucosylated glycoproteins in the endoplasmic reticulum. It may act in assisting protein assembly and/or in the retention within the ER of unassembled protein subunits. It seems to play a major role in the quality control apparatus of the ER by the retention of incorrectly folded proteins. Associated with partial T-cell antigen receptor complexes that escape the ER of immature thymocytes, it may function as a signaling complex regulating thymocyte maturation. Additionally it may play a role in receptor-mediated endocytosis at the synapse. The sequence is that of Calnexin (Canx) from Rattus norvegicus (Rat).